We begin with the raw amino-acid sequence, 91 residues long: Cell division topological specificity factor (91 aa).

This sequence belongs to the MinE family.

Its function is as follows. Prevents the cell division inhibition by proteins MinC and MinD at internal division sites while permitting inhibition at polar sites. This ensures cell division at the proper site by restricting the formation of a division septum at the midpoint of the long axis of the cell. This chain is Cell division topological specificity factor, found in Chloroflexus aurantiacus (strain ATCC 29366 / DSM 635 / J-10-fl).